Consider the following 587-residue polypeptide: Trans-activating transcriptional regulatory protein (587 aa).

The protein belongs to the nucleopolyhedrovirus IE-1 protein family.

In terms of biological role, regulatory transcriptional protein, which trans-activates gene expression from early baculovirus promoters. Can also trans-activate its own promoter, suggesting that it is autoregulated during normal infection of insect cells. The protein is Trans-activating transcriptional regulatory protein (IE1) of Bombyx mori nuclear polyhedrosis virus (BmNPV).